Reading from the N-terminus, the 439-residue chain is Diaminopimelate decarboxylase (439 aa).

Lysine 66 carries the N6-(pyridoxal phosphate)lysine modification. Pyridoxal 5'-phosphate-binding positions include glycine 248 and 290–293 (EPGR). 3 residues coordinate substrate: arginine 293, arginine 330, and tyrosine 334. Cysteine 361 functions as the Proton donor in the catalytic mechanism. The substrate site is built by glutamate 362 and tyrosine 390. Pyridoxal 5'-phosphate is bound at residue tyrosine 390.

It belongs to the Orn/Lys/Arg decarboxylase class-II family. LysA subfamily. Homodimer. Pyridoxal 5'-phosphate serves as cofactor.

The enzyme catalyses meso-2,6-diaminopimelate + H(+) = L-lysine + CO2. The protein operates within amino-acid biosynthesis; L-lysine biosynthesis via DAP pathway; L-lysine from DL-2,6-diaminopimelate: step 1/1. In terms of biological role, specifically catalyzes the decarboxylation of meso-diaminopimelate (meso-DAP) to L-lysine. This is Diaminopimelate decarboxylase from Halalkalibacterium halodurans (strain ATCC BAA-125 / DSM 18197 / FERM 7344 / JCM 9153 / C-125) (Bacillus halodurans).